The sequence spans 161 residues: ATP synthase subunit b' (161 aa).

A helical membrane pass occupies residues 30-47 (VMAIQFLVLAALLNKLFY).

The protein belongs to the ATPase B chain family. F-type ATPases have 2 components, F(1) - the catalytic core - and F(0) - the membrane proton channel. F(1) has five subunits: alpha(3), beta(3), gamma(1), delta(1), epsilon(1). F(0) has four main subunits: a(1), b(1), b'(1) and c(10-14). The alpha and beta chains form an alternating ring which encloses part of the gamma chain. F(1) is attached to F(0) by a central stalk formed by the gamma and epsilon chains, while a peripheral stalk is formed by the delta, b and b' chains.

The protein localises to the cellular thylakoid membrane. F(1)F(0) ATP synthase produces ATP from ADP in the presence of a proton or sodium gradient. F-type ATPases consist of two structural domains, F(1) containing the extramembraneous catalytic core and F(0) containing the membrane proton channel, linked together by a central stalk and a peripheral stalk. During catalysis, ATP synthesis in the catalytic domain of F(1) is coupled via a rotary mechanism of the central stalk subunits to proton translocation. In terms of biological role, component of the F(0) channel, it forms part of the peripheral stalk, linking F(1) to F(0). The b'-subunit is a diverged and duplicated form of b found in plants and photosynthetic bacteria. The polypeptide is ATP synthase subunit b' (Picosynechococcus sp. (strain ATCC 27264 / PCC 7002 / PR-6) (Agmenellum quadruplicatum)).